The sequence spans 207 residues: Holliday junction resolvase RecU (207 aa).

Positions 1–21 (MTIRYPNGQVYRQPGPTKSKS) are disordered. Mg(2+) contacts are provided by Thr-87, Asp-89, Glu-102, and Gln-121.

This sequence belongs to the RecU family. It depends on Mg(2+) as a cofactor.

It localises to the cytoplasm. The enzyme catalyses Endonucleolytic cleavage at a junction such as a reciprocal single-stranded crossover between two homologous DNA duplexes (Holliday junction).. Endonuclease that resolves Holliday junction intermediates in genetic recombination. Cleaves mobile four-strand junctions by introducing symmetrical nicks in paired strands. Promotes annealing of linear ssDNA with homologous dsDNA. Required for DNA repair, homologous recombination and chromosome segregation. The chain is Holliday junction resolvase RecU from Lactiplantibacillus plantarum (strain ATCC BAA-793 / NCIMB 8826 / WCFS1) (Lactobacillus plantarum).